The sequence spans 44 residues: Thymosin beta-10 (44 aa).

2 stretches are compositionally biased toward basic and acidic residues: residues 1-25 (MADK…ETQE) and 33-44 (ETIEQEKRSEIS). A disordered region spans residues 1-44 (MADKPDMGEIASFDKAKLKKTETQEKNTLPTKETIEQEKRSEIS). Ala2 is modified (N-acetylalanine). An N6-acetyllysine modification is found at Lys4. Residue Ser12 is modified to Phosphoserine. Lys15 carries the post-translational modification N6-acetyllysine. A phosphothreonine mark is found at Thr21, Thr23, and Thr34. Lys39 is subject to N6-acetyllysine. Ser41 is modified (phosphoserine).

The protein belongs to the thymosin beta family.

The protein localises to the cytoplasm. It localises to the cytoskeleton. Functionally, plays an important role in the organization of the cytoskeleton. Binds to and sequesters actin monomers (G actin) and therefore inhibits actin polymerization. This is Thymosin beta-10 (Tmsb10) from Rattus norvegicus (Rat).